The chain runs to 292 residues: Acetylglutamate kinase (292 aa).

Residues 64–65 (GG), R86, and N190 each bind substrate.

It belongs to the acetylglutamate kinase family. ArgB subfamily.

The protein resides in the cytoplasm. It catalyses the reaction N-acetyl-L-glutamate + ATP = N-acetyl-L-glutamyl 5-phosphate + ADP. It functions in the pathway amino-acid biosynthesis; L-arginine biosynthesis; N(2)-acetyl-L-ornithine from L-glutamate: step 2/4. Functionally, catalyzes the ATP-dependent phosphorylation of N-acetyl-L-glutamate. The chain is Acetylglutamate kinase from Citrifermentans bemidjiense (strain ATCC BAA-1014 / DSM 16622 / JCM 12645 / Bem) (Geobacter bemidjiensis).